A 305-amino-acid chain; its full sequence is Phosphopantetheine adenylyltransferase (305 aa).

The protein belongs to the eukaryotic CoaD family.

The protein resides in the cytoplasm. It is found in the nucleus. The catalysed reaction is (R)-4'-phosphopantetheine + ATP + H(+) = 3'-dephospho-CoA + diphosphate. Reversibly transfers an adenylyl group from ATP to 4'-phosphopantetheine, yielding dephospho-CoA (dPCoA) and pyrophosphate. Plays a role in the physiological regulation of the intracellular CoA concentration. The chain is Phosphopantetheine adenylyltransferase (CAB4) from Saccharomyces cerevisiae (strain ATCC 204508 / S288c) (Baker's yeast).